The following is a 133-amino-acid chain: Ribonuclease P protein component (133 aa).

It belongs to the RnpA family. As to quaternary structure, consists of a catalytic RNA component (M1 or rnpB) and a protein subunit.

It catalyses the reaction Endonucleolytic cleavage of RNA, removing 5'-extranucleotides from tRNA precursor.. RNaseP catalyzes the removal of the 5'-leader sequence from pre-tRNA to produce the mature 5'-terminus. It can also cleave other RNA substrates such as 4.5S RNA. The protein component plays an auxiliary but essential role in vivo by binding to the 5'-leader sequence and broadening the substrate specificity of the ribozyme. The chain is Ribonuclease P protein component from Corynebacterium glutamicum (strain R).